The following is a 154-amino-acid chain: Major allergen Dau c 1 (154 aa).

It belongs to the BetVI family. As to quaternary structure, homodimer.

The sequence is that of Major allergen Dau c 1 from Daucus carota (Wild carrot).